The following is a 301-amino-acid chain: Recombination-associated protein RdgC (301 aa).

Belongs to the RdgC family.

It is found in the cytoplasm. It localises to the nucleoid. Functionally, may be involved in recombination. This Pseudoalteromonas atlantica (strain T6c / ATCC BAA-1087) protein is Recombination-associated protein RdgC.